We begin with the raw amino-acid sequence, 537 residues long: Immunoglobulin-like domain-containing receptor 1 (537 aa).

Residues Met1 to Ser22 form the signal peptide. In terms of domain architecture, Ig-like V-type spans Leu23–Lys161. Topologically, residues Leu23 to His166 are extracellular. An intrachain disulfide couples Cys44 to Cys144. Residues Trp167–Cys187 form a helical membrane-spanning segment. The Cytoplasmic segment spans residues Trp188 to Ile537. The tract at residues Pro333–Ile537 is disordered. A compositionally biased stretch (polar residues) spans Ser341–Ser357. 2 stretches are compositionally biased toward basic and acidic residues: residues Arg359–Gln380 and Arg434–Arg444. Positions Gln480–Ser490 are enriched in basic residues. Residues Ser490 and Ser492 each carry the phosphoserine modification. Positions Gly518–His530 are enriched in basic and acidic residues.

The protein belongs to the immunoglobulin superfamily. LISCH7 family. In terms of assembly, homooligomer. Interacts with MARVELD2 and OCLN; the interaction is required to recruit MARVELD2 to tricellular contacts. Interacts (via C-terminus) with TRA2A, TRA2B and SRSF1. Interacts with PLSCR1. Expressed in the vestibule and in hair cells and supporting cells of the cochlea. Expressed in epithelial tissues. Highly expressed in colon but also detected in small intestine, bladder and lung. In colon, expressed in the upper portion of the crypts (at protein level). Expressed in CCK secretory cells of the proximal small intestine (at protein level). Expressed in the organ of Corti, stria vascularis, utricle and saccule of the inner ear.

It is found in the cell membrane. The protein localises to the cell junction. Its subcellular location is the tight junction. The protein resides in the nucleus. It localises to the cytoplasm. Its function is as follows. Maintains epithelial barrier function by recruiting MARVELD2/tricellulin to tricellular tight junctions (tTJs). Crucial for normal hearing by maintaining the structural and functional integrity of tTJs, which are critical for the survival of auditory neurosensory HCs. Mediates fatty acids and lipoproteins-stimulated CCK/cholecystokinin secretion in the small intestine. In the inner ear, may regulate alternative pre-mRNA splicing via binding to TRA2A, TRA2B and SRSF1. The sequence is that of Immunoglobulin-like domain-containing receptor 1 from Mus musculus (Mouse).